A 342-amino-acid chain; its full sequence is Maltose regulon regulatory protein MalI (342 aa).

An HTH lacI-type domain is found at Ile-7–Gly-61. Residues Ile-9–Ser-28 constitute a DNA-binding region (H-T-H motif).

Functionally, repressor for the malX and malY genes. Also regulates its own expression. Binds maltose as an inducer. In Escherichia coli (strain K12), this protein is Maltose regulon regulatory protein MalI (malI).